The primary structure comprises 60 residues: Potassium channel toxin alpha-KTx 29.1 (60 aa).

Positions 1 to 28 are cleaved as a signal peptide; that stretch reads MKSVCGVLIILVVLTTMLSISTFSTVGA. Disulfide bonds link Cys-32–Cys-51, Cys-40–Cys-56, and Cys-44–Cys-58.

This sequence belongs to the short scorpion toxin superfamily. Potassium channel inhibitor family. Alpha-KTx 29 subfamily. Expressed by the venom gland.

It localises to the secreted. Its function is as follows. Weakly inhibits the Kv1.3/KCNA3 channel (1 uM of the toxin inhibits currents by 13.2%) and Kv7.1/KCNQ1 channel (10 uM of the toxin inhibits currents by 27.7%). The polypeptide is Potassium channel toxin alpha-KTx 29.1 (Lychas mucronatus (Chinese swimming scorpion)).